The following is a 712-amino-acid chain: Transferrin-binding protein B (712 aa).

Residues 1–20 (MNNPLVNQAAMVLPVFLLSA) form the signal peptide. Cys21 carries N-palmitoyl cysteine lipidation. The S-diacylglycerol cysteine moiety is linked to residue Cys21. Residues 59–196 (GGYGFAMRLK…YHGKEPSRQL (138 aa)) are N-terminal handle domain. Disordered stretches follow at residues 78-104 (EDEV…PKRQ), 123-144 (PYLK…QPKN), 223-256 (IIQP…LTDG), 309-338 (NGKA…SLSG), 364-398 (SAKT…SSEN), 442-495 (ASES…GDTN), and 689-712 (NATN…QPVR). Over residues 95-104 (DEPKELPKRQ) the composition is skewed to basic and acidic residues. A compositionally biased stretch (polar residues) spans 128–144 (SNHQNGNTGNGINQPKN). Residues 197–367 (PASGKITYKG…KVAVVGSAKT (171 aa)) form an N-terminal beta barrel domain region. 2 stretches are compositionally biased toward low complexity: residues 372 to 398 (ANGN…SSEN) and 446 to 459 (GNNQ…GGTA). The interval 389–555 (NGAAGTSSEN…SMFLQGERTD (167 aa)) is C-terminal handle domain. Positions 462–475 (RKFDHTPESDKKDA) are enriched in basic and acidic residues. Polar residues-rich tracts occupy residues 477-495 (AGTQ…GDTN) and 689-700 (NATNASGNSSAT). Positions 556–712 (EKEIPSEQNI…FGAKRQQPVR (157 aa)) are C-terminal beta barrel domain.

It belongs to the TbpB family. Isotype II subfamily. As to quaternary structure, binds only human holo-transferrin (TF), via the TF C-terminus. Forms a large complex with TF and TbpA. Interacts via its C-terminal domain with Slam1.

The protein localises to the cell outer membrane. It is found in the cell surface. Neisseria acquires iron by extracting it from serum transferrin (TF) in its human host. Acts as a TF receptor and is required for TF utilization. Involved in the initial capture of TF. Helps select only those TF molecules that can be used as an iron source and concentrates them on the cell surface, maintaining the iron-loaded status of the TF C-terminal lobe until its delivery to TbpA. The polypeptide is Transferrin-binding protein B (Neisseria meningitidis serogroup B (strain ATCC BAA-335 / MC58)).